A 476-amino-acid chain; its full sequence is MSFTVAIVGRPNVGKSTLFNRLVGKKLALVDDTPGVTRDRRPGDAKLIDLRFTIIDTAGLEQSGPETLQGRMWAQTEAAIDEADVTLFVIDAKAGLTPADETLGEMLRRRGKPVVLVANKSEARGSDAGFYDAFTLGLGEPCPVSAEHGQGMIDLRDAIVEAIGEDMAFPPDVDEAETDIVLPRTEPGSEEEEDEEPVYDETKPLRVAIIGRPNAGKSTLINRFLGEDRLLTGPEAGITRDSISVEWDWRGRTIKMFDTAGMRRKAKVTEKLEKLSVADSLRSIRFAETVVIVFDSTIPFEKQDLQLVDLVIREGRAAVLAFNKWDLVEDPQAYLADLREKTERLLPQARGIRAVPMSGQTGYGLDRLMQSIIDTDKTWNRRISTAKLNRWLDAQTTQHPPPAVSGRRLKLKYMTQVKARPPAFMISCTRPEAIPESYTRYLVNGLRKDFDMPGVPIRVHYRGSDNPFESKAKKRR.

EngA-type G domains are found at residues 3–167 (FTVA…GEDM) and 205–380 (LRVA…KTWN). GTP contacts are provided by residues 9–16 (GRPNVGKS), 56–60 (DTAGL), 119–122 (NKSE), 211–218 (GRPNAGKS), 258–262 (DTAGM), and 323–326 (NKWD). The KH-like domain maps to 381–465 (RRISTAKLNR…PIRVHYRGSD (85 aa)).

Belongs to the TRAFAC class TrmE-Era-EngA-EngB-Septin-like GTPase superfamily. EngA (Der) GTPase family. In terms of assembly, associates with the 50S ribosomal subunit.

In terms of biological role, GTPase that plays an essential role in the late steps of ribosome biogenesis. The chain is GTPase Der from Agrobacterium fabrum (strain C58 / ATCC 33970) (Agrobacterium tumefaciens (strain C58)).